Consider the following 350-residue polypeptide: UDP-N-acetylenolpyruvoylglucosamine reductase (350 aa).

An FAD-binding PCMH-type domain is found at 24-195; the sequence is HVEATARWLL…VAVEFNLPLL (172 aa). Arg172 is an active-site residue. Ser245 (proton donor) is an active-site residue. Glu342 is a catalytic residue.

It belongs to the MurB family. It depends on FAD as a cofactor.

The protein localises to the cytoplasm. The catalysed reaction is UDP-N-acetyl-alpha-D-muramate + NADP(+) = UDP-N-acetyl-3-O-(1-carboxyvinyl)-alpha-D-glucosamine + NADPH + H(+). Its pathway is cell wall biogenesis; peptidoglycan biosynthesis. In terms of biological role, cell wall formation. In Xanthomonas axonopodis pv. citri (strain 306), this protein is UDP-N-acetylenolpyruvoylglucosamine reductase.